A 318-amino-acid polypeptide reads, in one-letter code: MALKELRIGTRASQLALWQANWVKSELEKRYPDMTVTLTKIKTIGDKILDVPLAQVGGKGLFVKEIEEAMLRGEIDIAVHSMKDVPTEFPEGLGLYCITEREDPRDAVISNNVKFADLPQGARIGTSALRRQAQLLKVRPDLEMVIIRGNVQTRMDKLKTEGLDAVILAAAGLNRLGFADQITELLPTDLSLPAIGQGALGIECNLSNQDVKDAISFFNHPDTSRAVRAERALLWRCEGGCQVPIAAFGEVTGDELKLTGFIASVDGKVSVKGVVTGPADDCEKLGVKLAEQLLSEGGHAILAEVYQREVSREKEIPV.

An S-(dipyrrolylmethanemethyl)cysteine modification is found at C241.

It belongs to the HMBS family. As to quaternary structure, monomer. Dipyrromethane serves as cofactor.

The catalysed reaction is 4 porphobilinogen + H2O = hydroxymethylbilane + 4 NH4(+). Its pathway is porphyrin-containing compound metabolism; protoporphyrin-IX biosynthesis; coproporphyrinogen-III from 5-aminolevulinate: step 2/4. Tetrapolymerization of the monopyrrole PBG into the hydroxymethylbilane pre-uroporphyrinogen in several discrete steps. The sequence is that of Porphobilinogen deaminase from Geobacter sp. (strain M21).